The chain runs to 240 residues: Peptidyl-tRNA hydrolase (240 aa).

TRNA is bound at residue Tyr14. Catalysis depends on His19, which acts as the Proton acceptor. Positions 64, 66, and 112 each coordinate tRNA. Residues 190–204 (KADEEKPRKDSEKKP) show a composition bias toward basic and acidic residues. Residues 190–240 (KADEEKPRKDSEKKPAGQSHIRQARNNNQPKLPATGPMADMLKKMFGNKGE) are disordered. The span at 209–219 (HIRQARNNNQP) shows a compositional bias: polar residues.

The protein belongs to the PTH family. Monomer.

The protein resides in the cytoplasm. The enzyme catalyses an N-acyl-L-alpha-aminoacyl-tRNA + H2O = an N-acyl-L-amino acid + a tRNA + H(+). Its function is as follows. Hydrolyzes ribosome-free peptidyl-tRNAs (with 1 or more amino acids incorporated), which drop off the ribosome during protein synthesis, or as a result of ribosome stalling. Functionally, catalyzes the release of premature peptidyl moieties from peptidyl-tRNA molecules trapped in stalled 50S ribosomal subunits, and thus maintains levels of free tRNAs and 50S ribosomes. This Rhizobium etli (strain ATCC 51251 / DSM 11541 / JCM 21823 / NBRC 15573 / CFN 42) protein is Peptidyl-tRNA hydrolase.